The following is a 369-amino-acid chain: Mannose-1-phosphate guanylyltransferase catalytic subunit beta (369 aa).

Residues 12–231 (RALILVGGYG…TGFWMDIGQP (220 aa)) are substrate-binding domain. Asp120 serves as a coordination point for GDP-alpha-D-mannose. Residue Asp120 participates in Mg(2+) binding. Residue Lys171 is part of the active site. Asp227 lines the GDP-alpha-D-mannose pocket. Asp227 contributes to the Mg(2+) binding site. The hexapeptide repeat domain stretch occupies residues 254–369 (YTGPGVVGNV…ASVPEPQIIM (116 aa)).

This sequence belongs to the transferase hexapeptide repeat family. As to quaternary structure, component of the GMPPA-GMPPB mannose-1-phosphate guanylyltransferase complex composed of 4 Gmppa subunits and 8 Gmppb subunits; the complex is organized into three layers, a central layer made up of 2 Gmppa dimers sandwiched between two layers each made up of 2 Gmppb dimers. Gmppb catalytic activity is reduced when part of the complex and binding of GDP-alpha-D-Mannose by Gmppa induces allosteric feedback inhibition of Gmppb. It depends on Mg(2+) as a cofactor.

The enzyme catalyses alpha-D-mannose 1-phosphate + GTP + H(+) = GDP-alpha-D-mannose + diphosphate. The protein operates within nucleotide-sugar biosynthesis; GDP-alpha-D-mannose biosynthesis; GDP-alpha-D-mannose from alpha-D-mannose 1-phosphate (GTP route): step 1/1. Enzyme activity is reduced by incorporation into the GMPPA-GMPPB mannose-1-phosphate guanylyltransferase complex. Allosterically inhibited, when part of the GMPPA-GMPPB complex, by GDP-alpha-D-mannose binding to Gmppa. Its function is as follows. Catalytic subunit of the GMPPA-GMPPB mannose-1-phosphate guanylyltransferase complex. Catalyzes the formation of GDP-mannose, an essential precursor of glycan moieties of glycoproteins and glycolipids. Can catalyze the reverse reaction in vitro. Together with GMPPA regulates GDP-alpha-D-mannose levels. The sequence is that of Mannose-1-phosphate guanylyltransferase catalytic subunit beta from Drosophila melanogaster (Fruit fly).